The primary structure comprises 509 residues: Methylthioalkylmalate synthase 1-1, chloroplastic (509 aa).

The transit peptide at 1 to 55 directs the protein to the chloroplast; sequence MSFSPTYSIVMASPLLTSSQMIPTTGSTVGFRSILPFGSLRLTRPYKKTSLFISY. In terms of domain architecture, Pyruvate carboxyltransferase spans 91 to 365; the sequence is VRVYDTTLRD…YTRIDTRQIM (275 aa). The Mn(2+) site is built by Asp-100, His-298, and His-300.

It belongs to the alpha-IPM synthase/homocitrate synthase family. Monomer. The cofactor is Mn(2+). Requires Co(2+) as cofactor.

Its subcellular location is the plastid. The protein localises to the chloroplast. The catalysed reaction is 4-methylsulfanyl-2-oxobutanoate + acetyl-CoA + H2O = 2-(2-methylsulfanyl)ethylmalate + CoA + H(+). It participates in secondary metabolite biosynthesis. With respect to regulation, inhibited by EDTA, Cu(2+) and Zn(2+). In terms of biological role, determines the side chain length of aliphatic glucosinolate structures. Involved in the biosynthesis of glucosinolate derivative natural products such as 6-(methylsulfinyl)hexylisothiocyanate (6-MSITC), a compound found in wasabi with diverse health-promoting properties. Catalyzes the conversion of 4-methylsulfanyl-2-oxobutanoate (4-MTOB) into 2-(2-methylsulfanyl)ethylmalate (2-(2-MT)EM). The sequence is that of Methylthioalkylmalate synthase 1-1, chloroplastic from Eutrema japonicum (Wasabi plant).